A 143-amino-acid polypeptide reads, in one-letter code: Period circadian protein (143 aa).

Residues 25-130 form a disordered region; it reads NSKPVTAPTQ…GPSLAADNSI (106 aa). 2 stretches are compositionally biased toward low complexity: residues 71-93 and 114-126; these read SGNC…ITGT and GGAA…SLAA.

As to quaternary structure, forms a heterodimer with timeless (TIM); the complex then translocates into the nucleus. In terms of processing, phosphorylated with a circadian rhythmicity, probably by the double-time protein (dbt). Phosphorylation could be implicated in the stability of per monomer and in the formation of heterodimer per-tim.

It is found in the nucleus. Its subcellular location is the cytoplasm. The protein localises to the perinuclear region. Functionally, essential for biological clock functions. Determines the period length of circadian and ultradian rhythms; an increase in PER dosage leads to shortened circadian rhythms and a decrease leads to lengthened circadian rhythms. Essential for the circadian rhythmicity of locomotor activity, eclosion behavior, and for the rhythmic component of the male courtship song that originates in the thoracic nervous system. The biological cycle depends on the rhythmic formation and nuclear localization of the TIM-PER complex. Light induces the degradation of TIM, which promotes elimination of PER. Nuclear activity of the heterodimer coordinatively regulates PER and TIM transcription through a negative feedback loop. Behaves as a negative element in circadian transcriptional loop. Does not appear to bind DNA, suggesting indirect transcriptional inhibition. This Drosophila picticornis (Fruit fly) protein is Period circadian protein (per).